The chain runs to 275 residues: NADPH-dependent 7-cyano-7-deazaguanine reductase (275 aa).

81–83 (VES) contacts substrate. 83 to 84 (SK) serves as a coordination point for NADPH. Cys-182 functions as the Thioimide intermediate in the catalytic mechanism. Residue Asp-189 is the Proton donor of the active site. Residue 221 to 222 (HE) participates in substrate binding. Residue 250-251 (RG) coordinates NADPH.

It belongs to the GTP cyclohydrolase I family. QueF type 2 subfamily. As to quaternary structure, homodimer.

Its subcellular location is the cytoplasm. The catalysed reaction is 7-aminomethyl-7-carbaguanine + 2 NADP(+) = 7-cyano-7-deazaguanine + 2 NADPH + 3 H(+). It participates in tRNA modification; tRNA-queuosine biosynthesis. In terms of biological role, catalyzes the NADPH-dependent reduction of 7-cyano-7-deazaguanine (preQ0) to 7-aminomethyl-7-deazaguanine (preQ1). The protein is NADPH-dependent 7-cyano-7-deazaguanine reductase of Polaromonas sp. (strain JS666 / ATCC BAA-500).